A 171-amino-acid chain; its full sequence is ATP synthase subunit b (171 aa).

Residues 12 to 34 (FGLNLNLFETNVINLAVVIFGLY) form a helical membrane-spanning segment.

The protein belongs to the ATPase B chain family. In terms of assembly, F-type ATPases have 2 components, F(1) - the catalytic core - and F(0) - the membrane proton channel. F(1) has five subunits: alpha(3), beta(3), gamma(1), delta(1), epsilon(1). F(0) has four main subunits: a(1), b(1), b'(1) and c(10-14). The alpha and beta chains form an alternating ring which encloses part of the gamma chain. F(1) is attached to F(0) by a central stalk formed by the gamma and epsilon chains, while a peripheral stalk is formed by the delta, b and b' chains.

It localises to the cellular thylakoid membrane. Its function is as follows. F(1)F(0) ATP synthase produces ATP from ADP in the presence of a proton or sodium gradient. F-type ATPases consist of two structural domains, F(1) containing the extramembraneous catalytic core and F(0) containing the membrane proton channel, linked together by a central stalk and a peripheral stalk. During catalysis, ATP synthesis in the catalytic domain of F(1) is coupled via a rotary mechanism of the central stalk subunits to proton translocation. Functionally, component of the F(0) channel, it forms part of the peripheral stalk, linking F(1) to F(0). This is ATP synthase subunit b from Prochlorococcus marinus (strain MIT 9211).